The chain runs to 81 residues: Trefoil factor 1 (81 aa).

An N-terminal signal peptide occupies residues 1–23 (MEHRVIYVLVLVCALTLSSLAQG). Residues 26-69 (ETCTVAPHHRDNCGSPGITPSQCKDKGCCFDNTVRGVPWCYYPV) enclose the P-type domain. Disulfide bonds link C28–C54, C38–C53, and C48–C65.

Its subcellular location is the secreted. In terms of biological role, stabilizer of the mucous gel overlying the gastrointestinal mucosa that provides a physical barrier against various noxious agents. The protein is Trefoil factor 1 (TFF1) of Canis lupus familiaris (Dog).